The primary structure comprises 233 residues: Bcl-2-like protein 1 (233 aa).

Positions 4–24 (SNRELVVDFLSYKLSQKGYSW) match the BH4 motif. Residues 29-71 (DVEENRTEAPEGTESEAETPSAINGNPSWHLADSPAVNGATGH) are disordered. Residue Ser-49 is modified to Phosphoserine; by PLK3. Ser-62 carries the post-translational modification Phosphoserine; by CDK1. Positions 86–100 (VKQALREAGDEFELR) match the BH3 motif. The BH1 motif lies at 129–148 (ELFRDGVNWGRIVAFFSFGG). Positions 180–195 (PWIQENGGWDTFVELY) match the BH2 motif. A helical membrane pass occupies residues 210-226 (FNRWFLTGMTLAGVVLL).

The protein belongs to the Bcl-2 family. As to quaternary structure, homodimer. Heterodimers with BAX, BAK or BCL2. Heterodimerization with BAX does not seem to be required for anti-apoptotic activity. Interacts with BCL2L11. Interacts with BAD. Interacts with SIVA1 isoform 1; the interaction inhibits the anti-apoptotic activity. Interacts with BECN1 and PGAM5. Interacts with IKZF3. Interacts with HEBP2. Interacts with BOP. Interacts with p53/TP53 and BBC3; interaction with BBC3 disrupts the interaction with p53/TP53. Interacts with DNM1L and CLTA; DNM1L and BCL2L1 may form a complex in synaptic vesicles that also contains clathrin and MFF. Interacts with ATP5F1A and ATP5F1B; the interactions mediate the association of BCL2L1 with the mitochondrial membrane ATP synthase F(1)F(0) ATP synthase. Interacts with VDAC1. Interacts (via the loop between motifs BH4 and BH3) with NLRP1 (via LRR repeats), but not with NLRP2, NLRP3, NLRP4, PYCARD, nor MEFV. Interacts with BCL2L11 (via BH3). Interacts with RNF183. Interacts with GIMAP3/IAN4. Interacts with GIMAP5 and HSPA8/HSC70; the interaction between HSPA8 and BCL2L1 is impaired in the absence of GIMAP5. Interacts with CLU (isoform 4); this interaction releases and activates BAX and promotes cell death. Post-translationally, proteolytically cleaved by caspases during apoptosis. The cleaved protein, lacking the BH4 motif, has pro-apoptotic activity. In terms of processing, phosphorylated on Ser-62 by CDK1. This phosphorylation is partial in normal mitotic cells, but complete in G2-arrested cells upon DNA-damage, thus promoting subsequent apoptosis probably by triggering caspases-mediated proteolysis. Phosphorylated by PLK3, leading to regulate the G2 checkpoint and progression to cytokinesis during mitosis. Phosphorylation at Ser-49 appears during the S phase and G2, disappears rapidly in early mitosis during prometaphase, metaphase and early anaphase, and re-appears during telophase and cytokinesis. Ubiquitinated by RNF183 during prolonged ER stress, leading to degradation by the proteosome.

Its subcellular location is the mitochondrion membrane. It is found in the nucleus membrane. It localises to the mitochondrion matrix. The protein localises to the cytoplasm. The protein resides in the cytoskeleton. Its subcellular location is the microtubule organizing center. It is found in the centrosome. It localises to the cytosol. The protein localises to the cytoplasmic vesicle. The protein resides in the secretory vesicle. Its subcellular location is the synaptic vesicle membrane. Its function is as follows. Potent inhibitor of cell death. Inhibits activation of caspases. Appears to regulate cell death by blocking the voltage-dependent anion channel (VDAC) by binding to it and preventing the release of the caspase activator, CYC1, from the mitochondrial membrane. Also acts as a regulator of G2 checkpoint and progression to cytokinesis during mitosis. Regulates presynaptic plasticity, including neurotransmitter release and recovery, number of axonal mitochondria as well as size and number of synaptic vesicle clusters. During synaptic stimulation, increases ATP availability from mitochondria through regulation of mitochondrial membrane ATP synthase F(1)F(0) activity and regulates endocytic vesicle retrieval in hippocampal neurons through association with DMN1L and stimulation of its GTPase activity in synaptic vesicles. May attenuate inflammation impairing NLRP1-inflammasome activation, hence CASP1 activation and IL1B release. This Sus scrofa (Pig) protein is Bcl-2-like protein 1 (BCL2L1).